The following is a 651-amino-acid chain: Acetyl-coenzyme A synthetase (651 aa).

Residues 191 to 194 (RGGK), Thr311, and Asn335 each bind CoA. ATP is bound by residues 387–389 (GEP), 411–416 (DTWWQT), Asp500, and Arg515. Position 523 (Ser523) interacts with CoA. Position 526 (Arg526) interacts with ATP. Residues Val537, His539, and Val542 each coordinate Mg(2+). Position 584 (Arg584) interacts with CoA. Lys609 bears the N6-acetyllysine mark.

It belongs to the ATP-dependent AMP-binding enzyme family. Requires Mg(2+) as cofactor. Post-translationally, acetylated. Deacetylation by the SIR2-homolog deacetylase activates the enzyme.

It catalyses the reaction acetate + ATP + CoA = acetyl-CoA + AMP + diphosphate. Functionally, catalyzes the conversion of acetate into acetyl-CoA (AcCoA), an essential intermediate at the junction of anabolic and catabolic pathways. AcsA undergoes a two-step reaction. In the first half reaction, AcsA combines acetate with ATP to form acetyl-adenylate (AcAMP) intermediate. In the second half reaction, it can then transfer the acetyl group from AcAMP to the sulfhydryl group of CoA, forming the product AcCoA. This is Acetyl-coenzyme A synthetase from Stutzerimonas stutzeri (strain A1501) (Pseudomonas stutzeri).